The chain runs to 536 residues: Putative beta-xylosidase (536 aa).

The Proton acceptor role is filled by Asp-14. Glu-186 functions as the Proton donor in the catalytic mechanism.

The protein belongs to the glycosyl hydrolase 43 family.

The catalysed reaction is Hydrolysis of (1-&gt;4)-beta-D-xylans, to remove successive D-xylose residues from the non-reducing termini.. The chain is Putative beta-xylosidase (yagH) from Escherichia coli (strain K12).